The following is a 177-amino-acid chain: Ribosome maturation factor RimP (177 aa).

This sequence belongs to the RimP family.

The protein resides in the cytoplasm. Its function is as follows. Required for maturation of 30S ribosomal subunits. The protein is Ribosome maturation factor RimP of Methylibium petroleiphilum (strain ATCC BAA-1232 / LMG 22953 / PM1).